Consider the following 473-residue polypeptide: Thermostable beta-glucosidase B (473 aa).

E196 (proton donor) is an active-site residue. E378 serves as the catalytic Nucleophile.

This sequence belongs to the glycosyl hydrolase 1 family.

It localises to the cytoplasm. It catalyses the reaction Hydrolysis of terminal, non-reducing beta-D-glucosyl residues with release of beta-D-glucose.. The chain is Thermostable beta-glucosidase B (bglB) from Thermobispora bispora (Microbispora bispora).